The primary structure comprises 296 residues: Urease operon transcriptional activator (296 aa).

The HTH araC/xylS-type domain maps to 171–268 (QAITHLITQE…NMTPSQFRLQ (98 aa)). 2 DNA-binding regions (H-T-H motif) span residues 188–209 (DDVAKALFTTPSTLRRHLNREG) and 235–258 (VFQISHRCGFGSNAYFCDVFKRKY).

Functionally, positive regulator of the expression of the urease operon. This is Urease operon transcriptional activator (ureR) from Escherichia coli.